The following is a 59-amino-acid chain: UPF0434 protein COSY_0767 (59 aa).

Belongs to the UPF0434 family.

This is UPF0434 protein COSY_0767 from Vesicomyosocius okutanii subsp. Calyptogena okutanii (strain HA).